A 119-amino-acid polypeptide reads, in one-letter code: Large ribosomal subunit protein bL12 (119 aa).

This sequence belongs to the bacterial ribosomal protein bL12 family. Homodimer. Part of the ribosomal stalk of the 50S ribosomal subunit. Forms a multimeric L10(L12)X complex, where L10 forms an elongated spine to which 2 to 4 L12 dimers bind in a sequential fashion. Binds GTP-bound translation factors.

Forms part of the ribosomal stalk which helps the ribosome interact with GTP-bound translation factors. Is thus essential for accurate translation. The chain is Large ribosomal subunit protein bL12 from Colwellia psychrerythraea (strain 34H / ATCC BAA-681) (Vibrio psychroerythus).